The following is a 321-amino-acid chain: Malate dehydrogenase (321 aa).

Residues Gly13–Gly18 and Asp38 contribute to the NAD(+) site. Positions 87 and 93 each coordinate substrate. Residues Asn100 and Val123–Asn125 each bind NAD(+). Residues Asn125 and Arg156 each coordinate substrate. His180 functions as the Proton acceptor in the catalytic mechanism.

This sequence belongs to the LDH/MDH superfamily. MDH type 3 family.

It carries out the reaction (S)-malate + NAD(+) = oxaloacetate + NADH + H(+). In terms of biological role, catalyzes the reversible oxidation of malate to oxaloacetate. The sequence is that of Malate dehydrogenase from Anaplasma phagocytophilum (strain HZ).